Reading from the N-terminus, the 226-residue chain is 7-cyano-7-deazaguanine synthase (226 aa).

9–19 provides a ligand contact to ATP; it reads YSGGLDSTTCL. Zn(2+) is bound by residues Cys-189, Cys-199, Cys-202, and Cys-205.

The protein belongs to the QueC family. Zn(2+) is required as a cofactor.

It carries out the reaction 7-carboxy-7-deazaguanine + NH4(+) + ATP = 7-cyano-7-deazaguanine + ADP + phosphate + H2O + H(+). Its pathway is purine metabolism; 7-cyano-7-deazaguanine biosynthesis. Functionally, catalyzes the ATP-dependent conversion of 7-carboxy-7-deazaguanine (CDG) to 7-cyano-7-deazaguanine (preQ(0)). This chain is 7-cyano-7-deazaguanine synthase, found in Pelobacter propionicus (strain DSM 2379 / NBRC 103807 / OttBd1).